The following is a 415-amino-acid chain: Putative competence-damage inducible protein (415 aa).

It belongs to the CinA family.

The chain is Putative competence-damage inducible protein from Limosilactobacillus reuteri (strain DSM 20016) (Lactobacillus reuteri).